The sequence spans 329 residues: MTTYPVPQNPLLLRVLRLMDAFSKSDDERDFYLDRVEGFIFYIDLDKDQEDLDKIYQELEENADRYCLIPKLTFYEIKKIMETFVNEKIYDIDTKEKFLEIVQSKNAREQFLEFLYDHETEQEKWQQFYVERSRIRIIEWLRNNQFQFVFEEDLDFSKHILEQLKVHLFDAKVSKELTQARQLLLNKSKVYYSNEALNPRPKRGRPPKQSAKVEAETTISSDIYTKVPSVARRFLFLPEITSPSSLTFSEKFDTEEEFLAHLRGGGRLEDQLNLAKFSERFDSLRELSAKLGYDSDGETGDFFDEEYDDEEEEIKPKKTTKRGRKKSRS.

Residues G292–S329 are disordered. The segment covering S295–E313 has biased composition (acidic residues). A compositionally biased stretch (basic residues) spans K317–S329.

This sequence belongs to the UPF0158 family.

The protein is UPF0158 protein CT_429 of Chlamydia trachomatis serovar D (strain ATCC VR-885 / DSM 19411 / UW-3/Cx).